The sequence spans 342 residues: GTPase Obg (342 aa).

Residues 1 to 159 (MKFLDEAKVY…MWIWLRLKLI (159 aa)) enclose the Obg domain. An OBG-type G domain is found at 160–327 (ADAGLVGLPN…ALRALQTEID (168 aa)). Residues 166–173 (GLPNAGKS), 191–195 (FTTLH), 212–215 (DIPG), 279–282 (SKAD), and 308–310 (SSA) each bind GTP. Positions 173 and 193 each coordinate Mg(2+).

This sequence belongs to the TRAFAC class OBG-HflX-like GTPase superfamily. OBG GTPase family. In terms of assembly, monomer. It depends on Mg(2+) as a cofactor.

The protein localises to the cytoplasm. Its function is as follows. An essential GTPase which binds GTP, GDP and possibly (p)ppGpp with moderate affinity, with high nucleotide exchange rates and a fairly low GTP hydrolysis rate. Plays a role in control of the cell cycle, stress response, ribosome biogenesis and in those bacteria that undergo differentiation, in morphogenesis control. This is GTPase Obg from Methylobacterium radiotolerans (strain ATCC 27329 / DSM 1819 / JCM 2831 / NBRC 15690 / NCIMB 10815 / 0-1).